Reading from the N-terminus, the 347-residue chain is GMP reductase (347 aa).

An NADP(+)-binding site is contributed by 108-131 (TDFEKTKQILIANPALNFLCIDVA). Residues G181 and G183 each coordinate K(+). The active-site Thioimidate intermediate is C186. 216–239 (IISDGGCTMPGDVAKAFGGGADFV) lines the NADP(+) pocket.

Belongs to the IMPDH/GMPR family. GuaC type 1 subfamily. As to quaternary structure, homotetramer.

The catalysed reaction is IMP + NH4(+) + NADP(+) = GMP + NADPH + 2 H(+). Its function is as follows. Catalyzes the irreversible NADPH-dependent deamination of GMP to IMP. It functions in the conversion of nucleobase, nucleoside and nucleotide derivatives of G to A nucleotides, and in maintaining the intracellular balance of A and G nucleotides. The protein is GMP reductase of Enterobacter sp. (strain 638).